We begin with the raw amino-acid sequence, 391 residues long: Phosphoglycerate kinase (391 aa).

Substrate contacts are provided by residues 21-23 (DLN), Arg-36, 59-62 (HLGR), Arg-113, and Arg-146. ATP-binding positions include Lys-197, Glu-319, and 345–348 (GGDT).

Belongs to the phosphoglycerate kinase family. As to quaternary structure, monomer.

It is found in the cytoplasm. It carries out the reaction (2R)-3-phosphoglycerate + ATP = (2R)-3-phospho-glyceroyl phosphate + ADP. It participates in carbohydrate degradation; glycolysis; pyruvate from D-glyceraldehyde 3-phosphate: step 2/5. The sequence is that of Phosphoglycerate kinase from Xylella fastidiosa (strain 9a5c).